The chain runs to 131 residues: Small ribosomal subunit protein eS6 (131 aa).

The protein belongs to the eukaryotic ribosomal protein eS6 family.

This Halobacterium salinarum (strain ATCC 29341 / DSM 671 / R1) protein is Small ribosomal subunit protein eS6.